A 406-amino-acid chain; its full sequence is Coenzyme A biosynthesis bifunctional protein CoaBC (406 aa).

Residues 1 to 191 (MLNNRNVLLC…ETSAPLEGKH (191 aa)) form a phosphopantothenoylcysteine decarboxylase region. Catalysis depends on cysteine 157, which acts as the Proton donor. The tract at residues 192–406 (VVITAGPTRE…ALSKQTGERS (215 aa)) is phosphopantothenate--cysteine ligase. 5 residues coordinate CTP: aspartate 281, lysine 291, phenylalanine 325, lysine 339, and lysine 343.

This sequence in the N-terminal section; belongs to the HFCD (homo-oligomeric flavin containing Cys decarboxylase) superfamily. The protein in the C-terminal section; belongs to the PPC synthetase family. Mg(2+) is required as a cofactor. The cofactor is FMN.

It catalyses the reaction N-[(R)-4-phosphopantothenoyl]-L-cysteine + H(+) = (R)-4'-phosphopantetheine + CO2. The catalysed reaction is (R)-4'-phosphopantothenate + L-cysteine + CTP = N-[(R)-4-phosphopantothenoyl]-L-cysteine + CMP + diphosphate + H(+). Its pathway is cofactor biosynthesis; coenzyme A biosynthesis; CoA from (R)-pantothenate: step 2/5. The protein operates within cofactor biosynthesis; coenzyme A biosynthesis; CoA from (R)-pantothenate: step 3/5. Catalyzes two sequential steps in the biosynthesis of coenzyme A. In the first step cysteine is conjugated to 4'-phosphopantothenate to form 4-phosphopantothenoylcysteine. In the second step the latter compound is decarboxylated to form 4'-phosphopantotheine. The polypeptide is Coenzyme A biosynthesis bifunctional protein CoaBC (Bacillus subtilis (strain 168)).